We begin with the raw amino-acid sequence, 257 residues long: Trans-aconitate 2-methyltransferase (257 aa).

Belongs to the methyltransferase superfamily. Tam family.

It localises to the cytoplasm. The enzyme catalyses trans-aconitate + S-adenosyl-L-methionine = (E)-3-(methoxycarbonyl)pent-2-enedioate + S-adenosyl-L-homocysteine. Functionally, catalyzes the S-adenosylmethionine monomethyl esterification of trans-aconitate. The chain is Trans-aconitate 2-methyltransferase from Sinorhizobium medicae (strain WSM419) (Ensifer medicae).